Consider the following 587-residue polypeptide: Pentatricopeptide repeat-containing protein OGR1, mitochondrial (587 aa).

A mitochondrion-targeting transit peptide spans 1–30; that stretch reads MSVSAAARHLESLLPRLASLRHYLQFHARL. PPR repeat units follow at residues 145 to 179, 200 to 203, 217 to 251, 252 to 286, 287 to 315, 319 to 349, 351 to 381, and 383 to 417; these read DVRL…DVAT, FHRL, NEVT…GLDR, NVRV…DQTL, VSYN…MPTR, DGVT…MRVA, NMKH…MPFP, and DIVL…GSNV. The interval 386–461 is type E motif; it reads LWQTLLGAAK…VPGFSYTEID (76 aa). The segment at 462 to 492 is type E(+) motif; sequence GVMHKFINGDKEHPRWQEIYRALEDIVSRIS. The interval 493 to 587 is type DYW motif; that stretch reads ELGYEPETSN…DGQCSCRDYW (95 aa).

It localises to the mitochondrion. Its function is as follows. Involved in multiple sites RNA editing events in mitochondria. Essential for C-to-U RNA editing at seven specific sites of nad2, nad4, cox2, cox3 and ccmC transcripts, all coding for proteins involved in the mitochondrial electron transport chain coupled to ATP generation. Required for normal growth and development. This Oryza sativa subsp. japonica (Rice) protein is Pentatricopeptide repeat-containing protein OGR1, mitochondrial.